A 512-amino-acid polypeptide reads, in one-letter code: Cytochrome P450 monooxygenase cheE (512 aa).

A helical membrane pass occupies residues 5-27 (YFAAESSWSPYVILVLALAAMVA). N-linked (GlcNAc...) asparagine glycosylation is found at Asn53, Asn124, and Asn168. Cys455 is a binding site for heme. N-linked (GlcNAc...) asparagine glycans are attached at residues Asn499 and Asn508.

Belongs to the cytochrome P450 family. Requires heme as cofactor.

The protein localises to the membrane. It participates in secondary metabolite biosynthesis. Functionally, cytochrome P450 monooxygenase; part of the gene cluster that mediates the biosynthesis of chaetoglobosin A which has a unique inhibitory activity against actin polymerization in mammalian cells. Chaetoglobosin A and its intermediates are involved in the morphological differentiation of C.globosum. The first step of the pathway is the synthesis of prochaetoglobosin I via condensation of one acetyl-CoA, 8 malonyl-CoA, and a L-tryptophan molecule by the PKS-NRPS hybrid synthetase cheA, followed by reduction of backbone double bond to install desired geometry by the enoyl reductase cheB. Further multiple oxidation steps performed by the cytochrome P450 monooxygenases cheE and cheG, as well as by the FAD-linked oxidoreductase cheF, lead to the formation of chaetoglobosin A. Depending on the order of action of these reductases, distinct intermediates can be identified. Within the pathway, the cytochrome P450 monooxygenase cheE catalyzes a stereospecific epoxidation on prochaetoglobosin I, cytoglobosin D, and chaetoglobosin J intermediates. The FAD-linked oxidoreductase cheF performs dehydrogenation of the C-20 hydroxyl groups in the 20-dihyrochaetoglobosin A and cytoglobosin D intermediates. Finally, the cytochrome P450 monooxygenase cheG can catalyze the stereospecific dihydroxylation of prochaetoglobosin I and prochaetoglobosin IV at C-19 and C-20, respectively. The Diels-Alderase cheD may play a role in the post-PKS-NRPS biosynthetic steps catalyzing Diels-Alder cyclization. In Chaetomium globosum (strain ATCC 6205 / CBS 148.51 / DSM 1962 / NBRC 6347 / NRRL 1970) (Soil fungus), this protein is Cytochrome P450 monooxygenase cheE.